An 85-amino-acid chain; its full sequence is Large ribosomal subunit protein bL27 (85 aa).

Residues 1 to 21 (MAHKKGLGSTKNGRDSQAKRL) are disordered.

It belongs to the bacterial ribosomal protein bL27 family.

The polypeptide is Large ribosomal subunit protein bL27 (Thermus thermophilus (strain ATCC BAA-163 / DSM 7039 / HB27)).